A 339-amino-acid chain; its full sequence is Dihydroorotate dehydrogenase (quinone) (339 aa).

Residues 62-66 (AGMDK) and threonine 86 each bind FMN. A substrate-binding site is contributed by lysine 66. Residue 111–115 (NRMGF) participates in substrate binding. Positions 139 and 172 each coordinate FMN. Residue asparagine 172 coordinates substrate. The Nucleophile role is filled by serine 175. A substrate-binding site is contributed by asparagine 177. Positions 217 and 245 each coordinate FMN. 246–247 (NT) serves as a coordination point for substrate. FMN is bound by residues glycine 268, glycine 297, and 318–319 (YS).

The protein belongs to the dihydroorotate dehydrogenase family. Type 2 subfamily. Monomer. FMN serves as cofactor.

The protein resides in the cell membrane. The enzyme catalyses (S)-dihydroorotate + a quinone = orotate + a quinol. It participates in pyrimidine metabolism; UMP biosynthesis via de novo pathway; orotate from (S)-dihydroorotate (quinone route): step 1/1. Its function is as follows. Catalyzes the conversion of dihydroorotate to orotate with quinone as electron acceptor. This is Dihydroorotate dehydrogenase (quinone) from Shewanella putrefaciens (strain CN-32 / ATCC BAA-453).